The chain runs to 358 residues: UDP-N-acetylglucosamine--N-acetylmuramyl-(pentapeptide) pyrophosphoryl-undecaprenol N-acetylglucosamine transferase (358 aa).

UDP-N-acetyl-alpha-D-glucosamine contacts are provided by residues 10–12 (TGG), N124, R165, S191, I246, and Q291.

Belongs to the glycosyltransferase 28 family. MurG subfamily.

The protein localises to the cell inner membrane. The catalysed reaction is di-trans,octa-cis-undecaprenyl diphospho-N-acetyl-alpha-D-muramoyl-L-alanyl-D-glutamyl-meso-2,6-diaminopimeloyl-D-alanyl-D-alanine + UDP-N-acetyl-alpha-D-glucosamine = di-trans,octa-cis-undecaprenyl diphospho-[N-acetyl-alpha-D-glucosaminyl-(1-&gt;4)]-N-acetyl-alpha-D-muramoyl-L-alanyl-D-glutamyl-meso-2,6-diaminopimeloyl-D-alanyl-D-alanine + UDP + H(+). It participates in cell wall biogenesis; peptidoglycan biosynthesis. Functionally, cell wall formation. Catalyzes the transfer of a GlcNAc subunit on undecaprenyl-pyrophosphoryl-MurNAc-pentapeptide (lipid intermediate I) to form undecaprenyl-pyrophosphoryl-MurNAc-(pentapeptide)GlcNAc (lipid intermediate II). This Citrifermentans bemidjiense (strain ATCC BAA-1014 / DSM 16622 / JCM 12645 / Bem) (Geobacter bemidjiensis) protein is UDP-N-acetylglucosamine--N-acetylmuramyl-(pentapeptide) pyrophosphoryl-undecaprenol N-acetylglucosamine transferase.